The following is a 208-amino-acid chain: MERELESAGLGPVAGVDEAGRGACCGPISIAACILPSDLDGVGLDRLTDSKKLTEKTRERLYDVIRDVAVSYSIIHISAEDIDRFGIQHANVSGMRRAVAALDVQPGYVLTDAVKVPGLPMPHLPVVKGDQMAKCISAASVLAKVSRDRVLRTLDEEFPGYGLASHKGYGTKAHMTAVSLHGGTPYHRYSYKNVAAAHEQWLKGKDRG.

Residues 11 to 203 form the RNase H type-2 domain; it reads GPVAGVDEAG…VAAAHEQWLK (193 aa). Residues Asp-17, Glu-18, and Asp-112 each coordinate a divalent metal cation.

This sequence belongs to the RNase HII family. It depends on Mn(2+) as a cofactor. Mg(2+) serves as cofactor.

The protein resides in the cytoplasm. The enzyme catalyses Endonucleolytic cleavage to 5'-phosphomonoester.. Endonuclease that specifically degrades the RNA of RNA-DNA hybrids. The protein is Ribonuclease HII of Corynebacterium jeikeium (strain K411).